The chain runs to 65 residues: Photosystem II reaction center protein Z (65 aa).

2 consecutive transmembrane segments (helical) span residues 8–28 (AVFA…VALA) and 41–61 (YAGA…DSVV).

The protein belongs to the PsbZ family. As to quaternary structure, PSII is composed of 1 copy each of membrane proteins PsbA, PsbB, PsbC, PsbD, PsbE, PsbF, PsbH, PsbI, PsbJ, PsbK, PsbL, PsbM, PsbT, PsbX, PsbY, PsbZ, Psb30/Ycf12, at least 3 peripheral proteins of the oxygen-evolving complex and a large number of cofactors. It forms dimeric complexes.

The protein resides in the plastid. Its subcellular location is the cyanelle thylakoid membrane. Its function is as follows. May control the interaction of photosystem II (PSII) cores with the light-harvesting antenna, regulates electron flow through the 2 photosystem reaction centers. PSII is a light-driven water plastoquinone oxidoreductase, using light energy to abstract electrons from H(2)O, generating a proton gradient subsequently used for ATP formation. This Cyanophora paradoxa protein is Photosystem II reaction center protein Z.